The primary structure comprises 365 residues: Aminomethyltransferase (365 aa).

The protein belongs to the GcvT family. In terms of assembly, the glycine cleavage system is composed of four proteins: P, T, L and H.

It catalyses the reaction N(6)-[(R)-S(8)-aminomethyldihydrolipoyl]-L-lysyl-[protein] + (6S)-5,6,7,8-tetrahydrofolate = N(6)-[(R)-dihydrolipoyl]-L-lysyl-[protein] + (6R)-5,10-methylene-5,6,7,8-tetrahydrofolate + NH4(+). Its function is as follows. The glycine cleavage system catalyzes the degradation of glycine. In Chlorobium phaeovibrioides (strain DSM 265 / 1930) (Prosthecochloris vibrioformis (strain DSM 265)), this protein is Aminomethyltransferase.